A 296-amino-acid chain; its full sequence is Formamidopyrimidine-DNA glycosylase (296 aa).

Pro2 (schiff-base intermediate with DNA) is an active-site residue. The Proton donor role is filled by Glu3. Catalysis depends on Lys58, which acts as the Proton donor; for beta-elimination activity. Positions 104, 126, and 169 each coordinate DNA. The FPG-type zinc finger occupies 260 to 296 (SVYDREGQACGTPGCGGTVARIVQAGRSTFYCAACQK). The active-site Proton donor; for delta-elimination activity is Arg286.

It belongs to the FPG family. Monomer. The cofactor is Zn(2+).

It carries out the reaction Hydrolysis of DNA containing ring-opened 7-methylguanine residues, releasing 2,6-diamino-4-hydroxy-5-(N-methyl)formamidopyrimidine.. The catalysed reaction is 2'-deoxyribonucleotide-(2'-deoxyribose 5'-phosphate)-2'-deoxyribonucleotide-DNA = a 3'-end 2'-deoxyribonucleotide-(2,3-dehydro-2,3-deoxyribose 5'-phosphate)-DNA + a 5'-end 5'-phospho-2'-deoxyribonucleoside-DNA + H(+). In terms of biological role, involved in base excision repair of DNA damaged by oxidation or by mutagenic agents. Acts as a DNA glycosylase that recognizes and removes damaged bases. Has a preference for oxidized purines, such as 7,8-dihydro-8-oxoguanine (8-oxoG). Has AP (apurinic/apyrimidinic) lyase activity and introduces nicks in the DNA strand. Cleaves the DNA backbone by beta-delta elimination to generate a single-strand break at the site of the removed base with both 3'- and 5'-phosphates. The polypeptide is Formamidopyrimidine-DNA glycosylase (Rhizobium etli (strain ATCC 51251 / DSM 11541 / JCM 21823 / NBRC 15573 / CFN 42)).